A 101-amino-acid chain; its full sequence is Small ribosomal subunit protein uS14 (101 aa).

It belongs to the universal ribosomal protein uS14 family. As to quaternary structure, part of the 30S ribosomal subunit. Contacts proteins S3 and S10.

Its function is as follows. Binds 16S rRNA, required for the assembly of 30S particles and may also be responsible for determining the conformation of the 16S rRNA at the A site. This Chlamydia muridarum (strain MoPn / Nigg) protein is Small ribosomal subunit protein uS14.